Here is a 187-residue protein sequence, read N- to C-terminus: Interferon beta (187 aa).

A signal peptide spans 1-21 (MTNKCLLQIALLLCFSTTALS). Tyr-24 is modified (phosphotyrosine). A disulfide bridge connects residues Cys-52 and Cys-162. N-linked (GlcNAc...) asparagine glycosylation is present at Asn-101.

This sequence belongs to the alpha/beta interferon family. As to quaternary structure, monomer.

It localises to the secreted. Functionally, type I interferon cytokine that plays a key role in the innate immune response to infection, developing tumors and other inflammatory stimuli. Signals via binding to high-affinity (IFNAR2) and low-affinity (IFNAR1) heterodimeric receptor, activating the canonical Jak-STAT signaling pathway resulting in transcriptional activation or repression of interferon-regulated genes that encode the effectors of the interferon response, such as antiviral proteins, regulators of cell proliferation and differentiation, and immunoregulatory proteins. Signals mostly via binding to a IFNAR1-IFNAR2 heterodimeric receptor, but can also function with IFNAR1 alone and independently of Jak-STAT pathways. Elicits a wide variety of responses, including antiviral and antibacterial activities, and can regulate the development of B-cells, myelopoiesis and lipopolysaccharide (LPS)-inducible production of tumor necrosis factor. Plays a role in neuronal homeostasis by regulating dopamine turnover and protecting dopaminergic neurons: acts by promoting neuronal autophagy and alpha-synuclein clearance, thereby preventing dopaminergic neuron loss. IFNB1 is more potent than interferon-alpha (IFN-alpha) in inducing the apoptotic and antiproliferative pathways required for control of tumor cell growth. The protein is Interferon beta (IFNB1) of Macaca fascicularis (Crab-eating macaque).